We begin with the raw amino-acid sequence, 444 residues long: N-succinylarginine dihydrolase (444 aa).

Residues alanine 19–serine 28, asparagine 110, and histidine 137–arginine 138 each bind substrate. Residue glutamate 174 is part of the active site. Arginine 214 serves as a coordination point for substrate. Residue histidine 250 is part of the active site. Substrate is bound by residues aspartate 252 and asparagine 362. Cysteine 368 functions as the Nucleophile in the catalytic mechanism.

Belongs to the succinylarginine dihydrolase family. In terms of assembly, homodimer.

The catalysed reaction is N(2)-succinyl-L-arginine + 2 H2O + 2 H(+) = N(2)-succinyl-L-ornithine + 2 NH4(+) + CO2. Its pathway is amino-acid degradation; L-arginine degradation via AST pathway; L-glutamate and succinate from L-arginine: step 2/5. Functionally, catalyzes the hydrolysis of N(2)-succinylarginine into N(2)-succinylornithine, ammonia and CO(2). This Shewanella sp. (strain ANA-3) protein is N-succinylarginine dihydrolase.